The sequence spans 374 residues: Chaperone protein DnaJ (374 aa).

Positions 5–70 (CYYEILNVSK…SKRSRYDQFG (66 aa)) constitute a J domain. Residues 130–207 (GVEKEITIPR…CYGNGKVKKQ (78 aa)) form a CR-type zinc finger. Zn(2+) contacts are provided by Cys143, Cys146, Cys159, Cys162, Cys181, Cys184, Cys195, and Cys198. CXXCXGXG motif repeat units lie at residues 143 to 150 (CDSCDGTG), 159 to 166 (CHACHGQG), 181 to 188 (CPVCNGTG), and 195 to 202 (CDACYGNG).

The protein belongs to the DnaJ family. Homodimer. The cofactor is Zn(2+).

Its subcellular location is the cytoplasm. In terms of biological role, participates actively in the response to hyperosmotic and heat shock by preventing the aggregation of stress-denatured proteins and by disaggregating proteins, also in an autonomous, DnaK-independent fashion. Unfolded proteins bind initially to DnaJ; upon interaction with the DnaJ-bound protein, DnaK hydrolyzes its bound ATP, resulting in the formation of a stable complex. GrpE releases ADP from DnaK; ATP binding to DnaK triggers the release of the substrate protein, thus completing the reaction cycle. Several rounds of ATP-dependent interactions between DnaJ, DnaK and GrpE are required for fully efficient folding. Also involved, together with DnaK and GrpE, in the DNA replication of plasmids through activation of initiation proteins. The sequence is that of Chaperone protein DnaJ from Francisella tularensis subsp. tularensis (strain FSC 198).